The following is a 607-amino-acid chain: Glutamine--fructose-6-phosphate aminotransferase [isomerizing] (607 aa).

The active-site Nucleophile; for GATase activity is the C2. The Glutamine amidotransferase type-2 domain occupies C2–N217. SIS domains follow at residues I283–A422 and V455–P597. K602 acts as the For Fru-6P isomerization activity in catalysis.

As to quaternary structure, homodimer.

The protein localises to the cytoplasm. It catalyses the reaction D-fructose 6-phosphate + L-glutamine = D-glucosamine 6-phosphate + L-glutamate. Catalyzes the first step in hexosamine metabolism, converting fructose-6P into glucosamine-6P using glutamine as a nitrogen source. This chain is Glutamine--fructose-6-phosphate aminotransferase [isomerizing], found in Brucella melitensis biotype 1 (strain ATCC 23456 / CCUG 17765 / NCTC 10094 / 16M).